The chain runs to 212 residues: MTDYITIAIPKGRILEESVTLFGKIGINCDELLSNTRKLIFENHEQRMRYMIVRATDVPTYVEYGCADLGIVGKDTLMEQEKDLYEPLDLKFGYCRMMVAEPAGLALDDDPSSWTNIRIATKYPNVTEKYFARKGVQVEIIKLYGSIELAPLVGLSERIVDLVSTGETLRQNGLVEVETIAEITTRLIVNRASLKTKHPRITEIIEGLEKHV.

It belongs to the ATP phosphoribosyltransferase family. Short subfamily. Heteromultimer composed of HisG and HisZ subunits.

It localises to the cytoplasm. The enzyme catalyses 1-(5-phospho-beta-D-ribosyl)-ATP + diphosphate = 5-phospho-alpha-D-ribose 1-diphosphate + ATP. Its pathway is amino-acid biosynthesis; L-histidine biosynthesis; L-histidine from 5-phospho-alpha-D-ribose 1-diphosphate: step 1/9. Functionally, catalyzes the condensation of ATP and 5-phosphoribose 1-diphosphate to form N'-(5'-phosphoribosyl)-ATP (PR-ATP). Has a crucial role in the pathway because the rate of histidine biosynthesis seems to be controlled primarily by regulation of HisG enzymatic activity. This Geobacter sulfurreducens (strain ATCC 51573 / DSM 12127 / PCA) protein is ATP phosphoribosyltransferase 2 (hisG2).